Reading from the N-terminus, the 186-residue chain is Cell division protein SepF (186 aa).

Disordered regions lie at residues 14–59 (EHDE…NETS) and 157–186 (GRSQ…RLAQ). The segment covering 16–27 (DEYEEDYDEEME) has biased composition (acidic residues). The segment covering 159–171 (SQESNETSSSVSS) has biased composition (low complexity).

It belongs to the SepF family. In terms of assembly, homodimer. Interacts with FtsZ.

It localises to the cytoplasm. Cell division protein that is part of the divisome complex and is recruited early to the Z-ring. Probably stimulates Z-ring formation, perhaps through the cross-linking of FtsZ protofilaments. Its function overlaps with FtsA. The sequence is that of Cell division protein SepF from Synechocystis sp. (strain ATCC 27184 / PCC 6803 / Kazusa).